Reading from the N-terminus, the 128-residue chain is Gas vesicle protein O (128 aa).

The tract at residues 1 to 49 (MANTPEDTQNTQNDSQNDSQNDSQKDTSARATSARAHQQPQEQPPSPMR) is disordered. Low complexity predominate over residues 7-22 (DTQNTQNDSQNDSQND). Polar residues predominate over residues 29-41 (ARATSARAHQQPQ).

Belongs to the gas vesicle GvpO family.

It localises to the gas vesicle. A minor component of the gas vesicle. May play a role in transcription and/or RNA stability and in GV assembly. Gas vesicles are hollow, gas filled proteinaceous nanostructures found in some microorganisms. It is not clear what function gas vesicles perform in soil bacteria. This is Gas vesicle protein O from Streptomyces sp. (strain CB03234).